The following is a 92-amino-acid chain: MSDRLTDDEIQAQLPAAWDRDGDEIVRTFEFESYLEGVGFASAAGGLAEEAFHHPEMTIGWREVEVRLTTHDAGGITQKDIDLAERFDELAE.

Belongs to the pterin-4-alpha-carbinolamine dehydratase family.

The catalysed reaction is (4aS,6R)-4a-hydroxy-L-erythro-5,6,7,8-tetrahydrobiopterin = (6R)-L-erythro-6,7-dihydrobiopterin + H2O. In Natronomonas pharaonis (strain ATCC 35678 / DSM 2160 / CIP 103997 / JCM 8858 / NBRC 14720 / NCIMB 2260 / Gabara) (Halobacterium pharaonis), this protein is Putative pterin-4-alpha-carbinolamine dehydratase.